We begin with the raw amino-acid sequence, 710 residues long: MMIGKLWRSVGTVGKFDGRYDGVRTMVGKASNRAGVHVTDTVLFEETSFEFSPSLTPELNEFPMPSLDVITPQAYLTPLGSQSINHAKFLQIPWRQFVFTKPLGLSKSTKLDEAVTLIENSSSSPSNLSTPEAYTDLLHACISAKSLHHGIKICSLILNNPSLRHNPKLLSKLITLFSVCRRLDLARKIFDDVTDSSLLTEKVWAAMAIGYSRNGSPRDALIVYVDMLCSFIEPGNFSISVALKACVDLKDLRVGRGIHAQIVKRKEKVDQVVYNVLLKLYMESGLFDDARKVFDGMSERNVVTWNSLISVLSKKVRVHEMFNLFRKMQEEMIGFSWATLTTILPACSRVAALLTGKEIHAQILKSKEKPDVPLLNSLMDMYGKCGEVEYSRRVFDVMLTKDLASWNIMLNCYAINGNIEEVINLFEWMIESGVAPDGITFVALLSGCSDTGLTEYGLSLFERMKTEFRVSPALEHYACLVDILGRAGKIKEAVKVIETMPFKPSASIWGSLLNSCRLHGNVSVGEIAAKELFVLEPHNPGNYVMVSNIYADAKMWDNVDKIREMMKQRGVKKEAGCSWVQVKDKIQIFVAGGGYEFRNSDEYKKVWTELQEAIEKSGYSPNTSVVLHDVDEETKANWVCGHSERLATTYSLIHTGEGVPIRITKNLRVCADCHSWMKIVSQVTRRVIVLRDTKRFHHFVDGICSCKDYW.

PPR repeat units follow at residues 166-196 (NPKL…VTDS), 200-234 (TEKV…FIEP), 235-269 (GNFS…KEKV), 270-304 (DQVV…NVVT), 305-331 (WNSL…MQEE), 336-370 (SWAT…KEKP), 371-401 (DVPL…MLTK), 402-436 (DLAS…GVAP), 437-467 (DGIT…MKTE), and 473-503 (ALEH…MPFK). A type E motif region spans residues 508–583 (IWGSLLNSCR…EAGCSWVQVK (76 aa)). Residues 584-615 (DKIQIFVAGGGYEFRNSDEYKKVWTELQEAIE) are type E(+) motif. A type DYW motif region spans residues 616–710 (KSGYSPNTSV…DGICSCKDYW (95 aa)).

The protein belongs to the PPR family. PCMP-H subfamily.

This chain is Pentatricopeptide repeat-containing protein At3g14330 (PCMP-H57), found in Arabidopsis thaliana (Mouse-ear cress).